The following is a 142-amino-acid chain: Probable signal recognition particle 19 kDa protein (142 aa).

Positions 115 to 142 (KTRQPGYTAPSVASSSAAAAGKKNKKKK) are disordered. The segment covering 123–135 (APSVASSSAAAAG) has biased composition (low complexity).

Belongs to the SRP19 family. In terms of assembly, component of a signal recognition particle complex that consists of a 7SL RNA molecule of 300 nucleotides and six protein subunits: srpa-72, srpa-68, SRP54, F37F2.2/SRP19, F25G6.8/SRP14 and ZK512.4/SRP9.

It is found in the cytoplasm. It localises to the nucleus. The protein resides in the nucleolus. Component of the signal recognition particle (SRP) complex, a ribonucleoprotein complex that mediates the cotranslational targeting of secretory and membrane proteins to the endoplasmic reticulum (ER). Binds directly to 7SL RNA. Mediates binding of SRP54 to the SRP complex. This is Probable signal recognition particle 19 kDa protein from Caenorhabditis elegans.